Consider the following 445-residue polypeptide: MGITVLKNEGLDFHARISTPLSEIDDDIQKELLDLTKKVKIAGFRAGKVPVSIVKKKYGTSVRNDIIERKINHSVNHVIKEHNLNIIGRPKIEELQNESDKALEFTVKIELLPKITIPDFKKISLDRPKLEVNSKDVEEQLEKLAALTKNYTKESKAKIKAGDQVTIDAIGYIKEKAFKDGKLNDFKVIIGSNALIPGFEKQLIGSKTGSEIDVNVTFPENYHAKDLAGKDARFVVQIKAVHTAEPTVIDDEFAKKFQSNSLEELRTHFTKQIENESEEAINTIMKMNLFDKLEKLLDFDVPESLLEQEKNILKSGTDKNEQDESLLKDKSSKEITAYYNKLALRRVRIGLLLAEYAKSKNLQLEPDDLRKVIMQQARNFPGQENMIFDFYKNNPRAIEGLKGPALEDKAVQYIFNHEIKLKEKKYTKEELEKYLEAEEQRITLI.

In terms of domain architecture, PPIase FKBP-type spans 162–247 (GDQVTIDAIG…IKAVHTAEPT (86 aa)).

It belongs to the FKBP-type PPIase family. Tig subfamily.

It localises to the cytoplasm. The enzyme catalyses [protein]-peptidylproline (omega=180) = [protein]-peptidylproline (omega=0). Its function is as follows. Involved in protein export. Acts as a chaperone by maintaining the newly synthesized protein in an open conformation. Functions as a peptidyl-prolyl cis-trans isomerase. The chain is Trigger factor from Rickettsia massiliae (strain Mtu5).